The primary structure comprises 416 residues: MMKLLFIIISIIFVINVSNSTPTLQLSGYFNVNETTNANLFYLFYESQNSPSTDPLILWLTGGPGCSSLMAAFYENGPYFVNDNLTLSENPNSWNMVANVLYVDSPLGAGFSYVVDSDGYSTTETEISENLYSFLTQFLSKYPKYSKLPLYIFGESYAGHYVPSFSYYIYQKNLGLATINLKGLAIGNGMVDPYIQYGSLGPFAYAHGMLDINALKETEGLYESCQQAIDSGDYNMTTQICNNIMDIVQEYAGNFNVYDVSKTCYPNEPLCYNFTAIIDYLNLASTKQSFGVLPNSTWNVCSTQPYSAIIRDWFNTPINYIPTLLENYKVLVYNGNYDWICNFLGSTEWTSQLKWKYNQEFNNSPRKILYINGNTISGYSQSYDNLTMQVLLGASHMAPREAPVAALAMVESFIQN.

Residues 1–20 form the signal peptide; sequence MMKLLFIIISIIFVINVSNS. Asn33 and Asn84 each carry an N-linked (GlcNAc...) asparagine glycan. Residue Ser156 is part of the active site. Residues Asn235, Asn273, and Asn295 are each glycosylated (N-linked (GlcNAc...) asparagine). Asp338 is an active-site residue. A glycan (N-linked (GlcNAc...) asparagine) is linked at Asn385. His396 is a catalytic residue.

The protein belongs to the peptidase S10 family.

The protein resides in the secreted. Probable carboxypeptidase. The protein is Serine carboxypeptidase S10 family member 1 of Dictyostelium discoideum (Social amoeba).